Reading from the N-terminus, the 193-residue chain is Crossover junction endodeoxyribonuclease RuvC (193 aa).

Active-site residues include D7, E68, and D141. Mg(2+) is bound by residues D7, E68, and D141.

The protein belongs to the RuvC family. As to quaternary structure, homodimer which binds Holliday junction (HJ) DNA. The HJ becomes 2-fold symmetrical on binding to RuvC with unstacked arms; it has a different conformation from HJ DNA in complex with RuvA. In the full resolvosome a probable DNA-RuvA(4)-RuvB(12)-RuvC(2) complex forms which resolves the HJ. Mg(2+) is required as a cofactor.

The protein localises to the cytoplasm. It catalyses the reaction Endonucleolytic cleavage at a junction such as a reciprocal single-stranded crossover between two homologous DNA duplexes (Holliday junction).. Functionally, the RuvA-RuvB-RuvC complex processes Holliday junction (HJ) DNA during genetic recombination and DNA repair. Endonuclease that resolves HJ intermediates. Cleaves cruciform DNA by making single-stranded nicks across the HJ at symmetrical positions within the homologous arms, yielding a 5'-phosphate and a 3'-hydroxyl group; requires a central core of homology in the junction. The consensus cleavage sequence is 5'-(A/T)TT(C/G)-3'. Cleavage occurs on the 3'-side of the TT dinucleotide at the point of strand exchange. HJ branch migration catalyzed by RuvA-RuvB allows RuvC to scan DNA until it finds its consensus sequence, where it cleaves and resolves the cruciform DNA. This Renibacterium salmoninarum (strain ATCC 33209 / DSM 20767 / JCM 11484 / NBRC 15589 / NCIMB 2235) protein is Crossover junction endodeoxyribonuclease RuvC.